We begin with the raw amino-acid sequence, 1902 residues long: PII-type proteinase (1902 aa).

An N-terminal signal peptide occupies residues 1–33; that stretch reads MQRKKKGLSILLAGTVALGALAVLPVGEIQAKA. A propeptide spanning residues 34–187 is cleaved from the precursor; sequence AISQQTKGSS…VTLAKVYYPT (154 aa). The Peptidase S8 domain occupies 191–697; sequence ANSMANVQAV…AGLVDVKAAI (507 aa). Catalysis depends on charge relay system residues aspartate 217, histidine 281, and serine 620. Residues 1796–1874 are disordered; it reads GKGDGTTGTS…GALPKTGETT (79 aa). Residues 1797–1812 show a composition bias toward gly residues; it reads KGDGTTGTSDKGGGQG. A compositionally biased stretch (polar residues) spans 1830 to 1843; the sequence is SQPSSGGNIPTNPA. An LPXTG sorting signal motif is present at residues 1867–1871; that stretch reads LPKTG. Threonine 1870 is modified (pentaglycyl murein peptidoglycan amidated threonine). Residues 1871 to 1902 constitute a propeptide, removed by sortase; that stretch reads GETTERPAFGFLGVIVVSLMGVLGLKRKQREE.

The protein belongs to the peptidase S8 family.

The protein resides in the secreted. The protein localises to the cell wall. The enzyme catalyses Endopeptidase activity with very broad specificity, although some subsite preference have been noted, e.g. large hydrophobic residues in the P1 and P4 positions, and Pro in the P2 position. Best known for its action on caseins, although it has been shown to hydrolyze hemoglobin and oxidized insulin B-chain.. Protease which breaks down milk proteins during the growth of the bacteria on milk. This chain is PII-type proteinase (prt), found in Lactococcus lactis subsp. cremoris (Streptococcus cremoris).